A 306-amino-acid chain; its full sequence is Ornithine carbamoyltransferase (306 aa).

Carbamoyl phosphate-binding positions include Ser51–Thr54, Gln78, Arg102, and His129–Gln132. Residues Asn157, Asp221, and Ser225–Met226 each bind L-ornithine. Residues Cys261 to Leu262 and Arg289 contribute to the carbamoyl phosphate site.

Belongs to the aspartate/ornithine carbamoyltransferase superfamily. OTCase family.

Its subcellular location is the cytoplasm. It carries out the reaction carbamoyl phosphate + L-ornithine = L-citrulline + phosphate + H(+). The protein operates within amino-acid biosynthesis; L-arginine biosynthesis; L-arginine from L-ornithine and carbamoyl phosphate: step 1/3. Its function is as follows. Reversibly catalyzes the transfer of the carbamoyl group from carbamoyl phosphate (CP) to the N(epsilon) atom of ornithine (ORN) to produce L-citrulline. The chain is Ornithine carbamoyltransferase from Campylobacter hominis (strain ATCC BAA-381 / DSM 21671 / CCUG 45161 / LMG 19568 / NCTC 13146 / CH001A).